Reading from the N-terminus, the 207-residue chain is Small ribosomal subunit protein uS4 (207 aa).

The segment at 35–54 (RPKPPGPQLGRPRRLSDRGQ) is disordered. Residues 97–163 (RRLDNVLFRL…AYFKTLAENI (67 aa)) form the S4 RNA-binding domain.

It belongs to the universal ribosomal protein uS4 family. As to quaternary structure, part of the 30S ribosomal subunit. Contacts protein S5. The interaction surface between S4 and S5 is involved in control of translational fidelity.

Functionally, one of the primary rRNA binding proteins, it binds directly to 16S rRNA where it nucleates assembly of the body of the 30S subunit. Its function is as follows. With S5 and S12 plays an important role in translational accuracy. In Dehalococcoides mccartyi (strain CBDB1), this protein is Small ribosomal subunit protein uS4.